A 101-amino-acid chain; its full sequence is STAS-domain containing protein PA14_20770 (101 aa).

In terms of domain architecture, STAS spans 14–101; that stretch reads LTIQIQGRFD…SNFEQLFKIS (88 aa).

Post-translationally, phosphorylated on a serine residue, possibly on Ser-56.

The protein resides in the secreted. The chain is STAS-domain containing protein PA14_20770 from Pseudomonas aeruginosa (strain UCBPP-PA14).